A 631-amino-acid chain; its full sequence is MKSYPLLSTIDQPADLRGLSRAELKQLAQELRDHVLTSVSQTGGHLSSNLGTVELTIALHHVFNTPQDRLVWDVGHQTYPHKILTGRRDRMAGLRQLGGISGFPRRDESEYDTFGTAHSSTSISAALGMALAAKIKGEDRRSVAIIGDGAMTAGMAFEALNNAGVSGANMLVVLNDNDMSISPPVGALNRYFARLMSGRFYSAARQGAKSVLKNAPPLLELARRFEEHAKGMIVPSTIFEEFGFTYVGPIDGHDLDSLIPTLENLRDRKGPQFLHVVTKKGYGYKLAEADPVAYHGPGKFNPAEGLKKAAPGKPSFTQVFGQWLCDMAAKDTRLVGITPAMREGSGMVEFEQRFPDRYFDVGIAEQHAVTFAAGLACEGLKPVVAIYSTFLQRGYDQLIHDVAIQNLPVVFALDRAGIVGADGATHAGAYDIAYVRCVPHLSLIAPADENECRQALTAAFEQQHPVAVRYPRGAGVGVAVQSELTALPWGRGELRREARGGGRRIAILAFGTLLYPALAAAEKLDATVANMRFIKPLDTELVLSLARSHEALVTVEEGCLQGGAGSAVLEALQAAGVNLPVLTLGLPDEFVEHGDPAKLLAQLGLDAAGIEQSILKRFGAKLELVRPAING.

Residues His76 and 117-119 contribute to the thiamine diphosphate site; that span reads AHS. Asp148 provides a ligand contact to Mg(2+). Thiamine diphosphate contacts are provided by residues 149 to 150, Asn177, Tyr284, and Glu365; that span reads GA. Residue Asn177 participates in Mg(2+) binding.

The protein belongs to the transketolase family. DXPS subfamily. As to quaternary structure, homodimer. The cofactor is Mg(2+). Requires thiamine diphosphate as cofactor.

The enzyme catalyses D-glyceraldehyde 3-phosphate + pyruvate + H(+) = 1-deoxy-D-xylulose 5-phosphate + CO2. The protein operates within metabolic intermediate biosynthesis; 1-deoxy-D-xylulose 5-phosphate biosynthesis; 1-deoxy-D-xylulose 5-phosphate from D-glyceraldehyde 3-phosphate and pyruvate: step 1/1. In terms of biological role, catalyzes the acyloin condensation reaction between C atoms 2 and 3 of pyruvate and glyceraldehyde 3-phosphate to yield 1-deoxy-D-xylulose-5-phosphate (DXP). The sequence is that of 1-deoxy-D-xylulose-5-phosphate synthase from Methylibium petroleiphilum (strain ATCC BAA-1232 / LMG 22953 / PM1).